The primary structure comprises 1004 residues: UPF0182 protein Mflv_4654 (1004 aa).

The next 7 helical transmembrane spans lie at 18–38, 63–83, 114–134, 176–196, 211–231, 260–280, and 288–308; these read FLIAVSAVLVLLLLLGPRFID, LVIFFVVAILVGAVVFAGLAL, LIGIGVPLAIGVLAGFVGQSY, FVGVFLAFLANLLGHYLFGGI, IQLITLVGLLMLLKAVAYWFD, KLILMAIAVICAVAVFSAIFL, and IGVVLLLLSSLVVGAGWPLVV. A compositionally biased stretch (low complexity) spans 896 to 940; sequence PGADATATGPAATEPPAGQAPQTQGNNTAPPAAQPPNRQGQAPAG. Positions 896–960 are disordered; that stretch reads PGADATATGP…TGPTQLSAAK (65 aa).

The protein belongs to the UPF0182 family.

The protein localises to the cell membrane. In Mycolicibacterium gilvum (strain PYR-GCK) (Mycobacterium gilvum (strain PYR-GCK)), this protein is UPF0182 protein Mflv_4654.